A 482-amino-acid polypeptide reads, in one-letter code: ATP-dependent rRNA helicase rrp3 (482 aa).

The disordered stretch occupies residues 1-55 (MSSVKRRKTEKNTSSGLKSKQAKEPKEASPLSSPEPTEENQNNEIEEGTEEEEVT). Positions 44–53 (EIEEGTEEEE) are enriched in acidic residues. The Q motif signature appears at 56–84 (KSFKDLGIVDSLCEACDTLGYKAPTPIQR). In terms of domain architecture, Helicase ATP-binding spans 87–258 (IPLALQGRDL…RASLKDPLRV (172 aa)). Position 100–107 (100–107 (AETGSGKT)) interacts with ATP. Residues 206-209 (DEAD) carry the DEAD box motif. Residues 282 to 430 (HKDTYLIYLL…EYQTVKDEVM (149 aa)) enclose the Helicase C-terminal domain. 2 stretches are compositionally biased toward basic and acidic residues: residues 444-456 (RNEMKNLHEDRGK) and 472-482 (RGRDEMDREEG). The interval 444 to 482 (RNEMKNLHEDRGKKGAVLKGRRPANGAKRGRDEMDREEG) is disordered.

It belongs to the DEAD box helicase family. DDX47/RRP3 subfamily. In terms of assembly, interacts with the SSU processome.

The protein resides in the nucleus. It carries out the reaction ATP + H2O = ADP + phosphate + H(+). In terms of biological role, ATP-dependent rRNA helicase required for pre-ribosomal RNA processing. Involved in the maturation of the 35S-pre-rRNA and to its cleavage to mature 18S rRNA. This chain is ATP-dependent rRNA helicase rrp3, found in Sclerotinia sclerotiorum (strain ATCC 18683 / 1980 / Ss-1) (White mold).